The sequence spans 411 residues: Basic leucine zipper 10 (411 aa).

Disordered regions lie at residues 1 to 36 (MNSIFSIDDFSDPFWETPPIPLNPDSSKPVTADEVS), 76 to 99 (SLPSVSGQNDFEDDSRFRDRDSGN), 140 to 251 (SVKP…NDLK), and 362 to 411 (NNFA…KCVD). A compositionally biased stretch (polar residues) spans 24–36 (PDSSKPVTADEVS). A compositionally biased stretch (basic and acidic residues) spans 89 to 98 (DSRFRDRDSG). 2 stretches are compositionally biased toward polar residues: residues 146-173 (STSSPETQLQPVQSSPLTQGELGVTSSL) and 183-193 (SMKQVTSGSSR). S196 carries the post-translational modification Phosphoserine. Acidic residues predominate over residues 196-206 (SDDEDLDEENE). The bZIP domain maps to 215–278 (DVKKSRRMLS…DEAAVGNRIL (64 aa)). Positions 217–236 (KKSRRMLSNRESARRSRRRK) are basic motif. The short motif at 219–226 (SRRMLSNR) is the Nuclear localization signal element. Positions 243-257 (LETQVNDLKGEHSSL) are leucine-zipper. The segment covering 368–390 (PSQTSSPLQRIRNGQNHHVTPSA) has biased composition (polar residues).

The protein belongs to the bZIP family. In terms of assembly, forms a heterodimer with BZIP1, BZIP2, BZIP9, BZIP11, BZIP44, BZIP53 and BZIP63. Interacts with ABI3 and forms a complex made of ABI3, BZIP53 and BZIP10. Binding with LSD1 leads to cytoplasmic retention. Expressed in roots, shoots, stems, young leaves, trichomes, hydathodes, siliques, seeds, and flowers, mostly in vascular tissues.

Its subcellular location is the nucleus. It is found in the cytoplasm. Its function is as follows. Transcription factor that binds to the C-box-like motif (5'-TGCTGACGTCA-3') and G-box-like motif (5'-CCACGTGGCC-3'), ABRE elements, of gene promoters. Binds to the 5'-ACGT-3' motif of seed storage protein (SSP) encoding gene promoters (e.g. At2S and CRU3) and promotes their expression in seeds when in complex with ABI3 and BZIP53. Involved in the defense responses to the biotrophic pathogen Hyaloperonospora parasitica and oxidative stress responses; mediates positively cell death. Promotes BZIP53-mediated response to hypoosmolarity stress that leads to POX1/PRODH1 accumulation. This is Basic leucine zipper 10 (BZIP10) from Arabidopsis thaliana (Mouse-ear cress).